Here is a 2622-residue protein sequence, read N- to C-terminus: Ankyrin-3 (2622 aa).

The interval 1 to 44 is disordered; it reads MAHAASQLKKNRDLEINAEEETEKKKKHRKRSRDRKKKSDANAS. Basic residues predominate over residues 25-38; the sequence is KKKHRKRSRDRKKK. Residue serine 39 is modified to Phosphoserine. 23 ANK repeats span residues 73–102, 106–135, 139–168, 172–201, 203–230, 242–271, 275–304, 308–337, 341–370, 374–403, 407–436, 440–469, 473–502, 506–535, 539–568, 572–601, 605–634, 638–667, 671–700, 704–733, 737–766, 770–799, and 803–832; these read NGLN…NVDA, KGNT…NVNA, NGFT…SQSL, DGFT…KGKV, LPAL…NADI, SGFT…AVDF, NDIT…KIDA, DGLT…PILS, NGLS…PVDD, DYLT…NPNA, NGFT…SIQA, SGLT…SPNT, RGET…QVEA, DDQT…SPNA, SGYT…SLSI, KGFT…SPDA, SGLT…SPHA, NGYT…DANA, QGIA…NVNL, SGLT…HVDA, MGYT…KVNA, NGYT…SPNE, and NGNT…EIMT. Serine 631 is modified (phosphoserine). Residues valine 851, serine 855, serine 869, serine 875, serine 921, serine 924, serine 930, serine 965, serine 967, and serine 1121 each carry the phosphoserine modification. Residues 868–889 form a disordered region; the sequence is LSDGEYISDGEEGEDAITGDTD. Residues 873 to 884 are compositionally biased toward acidic residues; that stretch reads YISDGEEGEDAI. ZU5 domains lie at 992–1147 and 1149–1296; these read FLVS…VVSR and KQES…LADC. Phosphoserine is present on residues serine 1458 and serine 1469. The disordered stretch occupies residues 1510 to 1539; it reads TPITVPGPAKSGSLSSSPSNTPSASPLKSI. Low complexity predominate over residues 1515–1536; it reads PGPAKSGSLSSSPSNTPSASPL. A phosphoserine mark is found at serine 1621, serine 1624, serine 1679, serine 1984, serine 2102, serine 2114, and serine 2117. Disordered regions lie at residues 1968-1992, 2099-2147, and 2292-2312; these read VESK…WTEF, ILES…FHEV, and SPDV…KDNQ. Residues 1977-1986 show a composition bias toward basic and acidic residues; the sequence is PKSDKGHSPE. Basic and acidic residues predominate over residues 2106–2127; it reads FSQHDQDKSPLSDSGFETRSEK. Positions 2128 to 2137 are enriched in polar residues; that stretch reads TPSAPQSAES. One can recognise a Death domain in the interval 2336–2420; the sequence is TDIRMAIVAD…DIVTLLEGPI (85 aa). Serine 2457, serine 2475, and serine 2544 each carry phosphoserine. The interval 2568–2622 is disordered; the sequence is CVPVGMKKMTRTPADGKARLNLQEEEGSARSEPKQGEGYKVKTKKEIRNVEKKAH. Basic and acidic residues predominate over residues 2594-2622; the sequence is GSARSEPKQGEGYKVKTKKEIRNVEKKAH.

As to quaternary structure, may be a constituent of a NFASC/NRCAM/ankyrin G complex. Interacts with RHBG. Directly interacts with DMD and betaDAG1; this interaction does not interfere with DMD-binding and is required for DMD and betaDAG1 retention at costameres. Interacts (via N-terminal ANK repeats) with SCHIP1 isoform 7 (via C-terminus); this interaction is required for the localization at axon initial segments (AISs) and nodes of Ranvier (NRs). Interacts with PLEC and FLNC. Interacts (via ANK repeats) with IQCJ-SCHIP1; required for IQCJ-SCHIP1 localization at axon initial segments (AIS) and nodes of Ranvier. Interacts with SCHIP1. Interacts with KCNA1; this inhibits channel activity. Interacts with SCN5A. Interacts with PKP2 and GJA1/CX43. In terms of assembly, interacts (via its C-terminal muscle-specific Obscurin/Titin-Binding-related domain sequence) with PLEC and FLNC. In terms of tissue distribution, expressed in the heart (at protein level). Expressed in skeletal muscle (at protein level). Expressed at highest levels in brain and testis, followed by skin, kidney, liver and spleen. May be specifically expressed in muscle tissues, including heart and skeletal muscle (extensor digitorum longus) (at protein level). As to expression, expressed in skeletal muscle, brain, lung, heart, testes and kidney.

The protein localises to the cytoplasm. It is found in the cytoskeleton. The protein resides in the cell projection. Its subcellular location is the axon. It localises to the cell membrane. The protein localises to the sarcolemma. It is found in the postsynaptic cell membrane. The protein resides in the lysosome. Its subcellular location is the T-tubule. Membrane-cytoskeleton linker. May participate in the maintenance/targeting of ion channels and cell adhesion molecules at the nodes of Ranvier and axonal initial segments. In skeletal muscle, required for costamere localization of DMD and betaDAG1. Regulates KCNA1 channel activity in function of dietary Mg(2+) levels, and thereby contributes to the regulation of renal Mg(2+) reabsorption. Required for intracellular adhesion and junctional conductance in myocytes, potentially via stabilization of GJA1/CX43 protein abundance and promotion of PKP2, GJA1/CX43, and SCN5A/Nav1.5 localization to cell-cell junctions. The protein is Ankyrin-3 (Ank3) of Rattus norvegicus (Rat).